The following is a 52-amino-acid chain: Large ribosomal subunit protein bL33 (52 aa).

This sequence belongs to the bacterial ribosomal protein bL33 family.

This chain is Large ribosomal subunit protein bL33, found in Helicobacter pylori (strain HPAG1).